Consider the following 266-residue polypeptide: Uridylate kinase (266 aa).

K26–G29 contributes to the ATP binding site. A UMP-binding site is contributed by G67. The ATP site is built by G68 and R72. Residues D87 and L148 to T155 contribute to the UMP site. Residues Y181 and D184 each coordinate ATP.

This sequence belongs to the UMP kinase family. As to quaternary structure, homohexamer.

The protein localises to the cytoplasm. It carries out the reaction UMP + ATP = UDP + ADP. It functions in the pathway pyrimidine metabolism; CTP biosynthesis via de novo pathway; UDP from UMP (UMPK route): step 1/1. With respect to regulation, inhibited by UTP. In terms of biological role, catalyzes the reversible phosphorylation of UMP to UDP. This is Uridylate kinase from Acidothermus cellulolyticus (strain ATCC 43068 / DSM 8971 / 11B).